The chain runs to 269 residues: 4-hydroxy-tetrahydrodipicolinate reductase (269 aa).

Residues 11–16 (GASGRM) and E37 contribute to the NAD(+) site. Position 38 (R38) interacts with NADP(+). NAD(+)-binding positions include 101-103 (GTT) and 125-128 (AGNM). The active-site Proton donor/acceptor is H158. (S)-2,3,4,5-tetrahydrodipicolinate is bound at residue H159. K162 functions as the Proton donor in the catalytic mechanism. 168–169 (GT) is a (S)-2,3,4,5-tetrahydrodipicolinate binding site.

The protein belongs to the DapB family.

The protein resides in the cytoplasm. The catalysed reaction is (S)-2,3,4,5-tetrahydrodipicolinate + NAD(+) + H2O = (2S,4S)-4-hydroxy-2,3,4,5-tetrahydrodipicolinate + NADH + H(+). The enzyme catalyses (S)-2,3,4,5-tetrahydrodipicolinate + NADP(+) + H2O = (2S,4S)-4-hydroxy-2,3,4,5-tetrahydrodipicolinate + NADPH + H(+). Its pathway is amino-acid biosynthesis; L-lysine biosynthesis via DAP pathway; (S)-tetrahydrodipicolinate from L-aspartate: step 4/4. Its function is as follows. Catalyzes the conversion of 4-hydroxy-tetrahydrodipicolinate (HTPA) to tetrahydrodipicolinate. The protein is 4-hydroxy-tetrahydrodipicolinate reductase of Ruegeria pomeroyi (strain ATCC 700808 / DSM 15171 / DSS-3) (Silicibacter pomeroyi).